We begin with the raw amino-acid sequence, 156 residues long: 6,7-dimethyl-8-ribityllumazine synthase (156 aa).

5-amino-6-(D-ribitylamino)uracil is bound by residues Phe-22, 57-59 (AVE), and 81-83 (CVI). 86–87 (GT) lines the (2S)-2-hydroxy-3-oxobutyl phosphate pocket. Residue His-89 is the Proton donor of the active site. Phe-114 contributes to the 5-amino-6-(D-ribitylamino)uracil binding site. Arg-128 serves as a coordination point for (2S)-2-hydroxy-3-oxobutyl phosphate.

Belongs to the DMRL synthase family. As to quaternary structure, forms an icosahedral capsid composed of 60 subunits, arranged as a dodecamer of pentamers.

The enzyme catalyses (2S)-2-hydroxy-3-oxobutyl phosphate + 5-amino-6-(D-ribitylamino)uracil = 6,7-dimethyl-8-(1-D-ribityl)lumazine + phosphate + 2 H2O + H(+). It functions in the pathway cofactor biosynthesis; riboflavin biosynthesis; riboflavin from 2-hydroxy-3-oxobutyl phosphate and 5-amino-6-(D-ribitylamino)uracil: step 1/2. In terms of biological role, catalyzes the formation of 6,7-dimethyl-8-ribityllumazine by condensation of 5-amino-6-(D-ribitylamino)uracil with 3,4-dihydroxy-2-butanone 4-phosphate. This is the penultimate step in the biosynthesis of riboflavin. This Tolumonas auensis (strain DSM 9187 / NBRC 110442 / TA 4) protein is 6,7-dimethyl-8-ribityllumazine synthase.